The following is a 123-amino-acid chain: Small ribosomal subunit protein uS13 (123 aa).

The disordered stretch occupies residues 97 to 123 (PVRGQRTHTNAKTRKGRSKLPVAAKKK).

The protein belongs to the universal ribosomal protein uS13 family. As to quaternary structure, part of the 30S ribosomal subunit. Forms a loose heterodimer with protein S19. Forms two bridges to the 50S subunit in the 70S ribosome.

Located at the top of the head of the 30S subunit, it contacts several helices of the 16S rRNA. In the 70S ribosome it contacts the 23S rRNA (bridge B1a) and protein L5 of the 50S subunit (bridge B1b), connecting the 2 subunits; these bridges are implicated in subunit movement. Contacts the tRNAs in the A and P-sites. The protein is Small ribosomal subunit protein uS13 of Ehrlichia chaffeensis (strain ATCC CRL-10679 / Arkansas).